The sequence spans 359 residues: Phosphoserine aminotransferase (359 aa).

R41 contributes to the L-glutamate binding site. Pyridoxal 5'-phosphate contacts are provided by residues 75 to 76 (AS), W101, T152, D171, and Q194. The residue at position 195 (K195) is an N6-(pyridoxal phosphate)lysine. A pyridoxal 5'-phosphate-binding site is contributed by 236 to 237 (NT).

This sequence belongs to the class-V pyridoxal-phosphate-dependent aminotransferase family. SerC subfamily. Homodimer. The cofactor is pyridoxal 5'-phosphate.

The protein resides in the cytoplasm. The enzyme catalyses O-phospho-L-serine + 2-oxoglutarate = 3-phosphooxypyruvate + L-glutamate. It catalyses the reaction 4-(phosphooxy)-L-threonine + 2-oxoglutarate = (R)-3-hydroxy-2-oxo-4-phosphooxybutanoate + L-glutamate. It participates in amino-acid biosynthesis; L-serine biosynthesis; L-serine from 3-phospho-D-glycerate: step 2/3. The protein operates within cofactor biosynthesis; pyridoxine 5'-phosphate biosynthesis; pyridoxine 5'-phosphate from D-erythrose 4-phosphate: step 3/5. In terms of biological role, catalyzes the reversible conversion of 3-phosphohydroxypyruvate to phosphoserine and of 3-hydroxy-2-oxo-4-phosphonooxybutanoate to phosphohydroxythreonine. The sequence is that of Phosphoserine aminotransferase from Acinetobacter baumannii (strain ACICU).